Consider the following 397-residue polypeptide: ATP-dependent RNA helicase eIF4A (397 aa).

Residues Tyr-23–Gln-51 carry the Q motif motif. The Helicase ATP-binding domain maps to Ile-54 to Ile-224. Ala-67–Thr-74 provides a ligand contact to ATP. The short motif at Asp-172–Asp-175 is the DEAD box element. One can recognise a Helicase C-terminal domain in the interval Gly-235–Phe-396.

This sequence belongs to the DEAD box helicase family. eIF4A subfamily. As to quaternary structure, component of the eIF4F complex, which composition varies with external and internal environmental conditions. It is composed of at least eIF4A, eIF4E and eIF4G.

Its subcellular location is the cytoplasm. The catalysed reaction is ATP + H2O = ADP + phosphate + H(+). ATP-dependent RNA helicase which is a subunit of the eIF4F complex involved in cap recognition and is required for mRNA binding to ribosome. In the current model of translation initiation, eIF4A unwinds RNA secondary structures in the 5'-UTR of mRNAs which is necessary to allow efficient binding of the small ribosomal subunit, and subsequent scanning for the initiator codon. In Candida albicans (strain SC5314 / ATCC MYA-2876) (Yeast), this protein is ATP-dependent RNA helicase eIF4A (TIF1).